A 215-amino-acid polypeptide reads, in one-letter code: Large ribosomal subunit protein uL4 (215 aa).

The disordered stretch occupies residues 43 to 101 (HQRQGTSKTKERGEVRGSGRKLYRQKGTGNARVGDAQSPIRRGGGRAHGARPRDYAHDL). Residues 50–59 (KTKERGEVRG) show a composition bias toward basic and acidic residues.

It belongs to the universal ribosomal protein uL4 family. In terms of assembly, part of the 50S ribosomal subunit.

One of the primary rRNA binding proteins, this protein initially binds near the 5'-end of the 23S rRNA. It is important during the early stages of 50S assembly. It makes multiple contacts with different domains of the 23S rRNA in the assembled 50S subunit and ribosome. Functionally, forms part of the polypeptide exit tunnel. The polypeptide is Large ribosomal subunit protein uL4 (Salinibacter ruber (strain DSM 13855 / M31)).